A 137-amino-acid polypeptide reads, in one-letter code: Keratin-associated protein 15-1 (137 aa).

The protein belongs to the PMG family. Interacts with hair keratins.

In the hair cortex, hair keratin intermediate filaments are embedded in an interfilamentous matrix, consisting of hair keratin-associated proteins (KRTAP), which are essential for the formation of a rigid and resistant hair shaft through their extensive disulfide bond cross-linking with abundant cysteine residues of hair keratins. The matrix proteins include the high-sulfur and high-glycine-tyrosine keratins. In Homo sapiens (Human), this protein is Keratin-associated protein 15-1 (KRTAP15-1).